Here is a 25-residue protein sequence, read N- to C-terminus: Xenoposin precursor fragment BM3 (25 aa).

Expressed by the skin glands.

The protein resides in the secreted. Antimicrobial peptide. This Xenopus boumbaensis (Mawa clawed frog) protein is Xenoposin precursor fragment BM3.